Consider the following 186-residue polypeptide: Transposons Tn1721 resolvase (186 aa).

The region spanning 4–137 (HRIGYVRVSS…EGIALAKQRG (134 aa)) is the Resolvase/invertase-type recombinase catalytic domain. The active-site O-(5'-phospho-DNA)-serine intermediate is Ser12. Positions 164–183 (KAQLAREFNISRETLYQYLR) form a DNA-binding region, H-T-H motif.

Belongs to the site-specific recombinase resolvase family.

Its function is as follows. Resolvase catalyzes the resolution (a site-specific recombination) of the cointegrated replicon to yield the final transposition products. This is Transposons Tn1721 resolvase (tnpR) from Escherichia coli.